The chain runs to 453 residues: Bifunctional protein GlmU (453 aa).

A pyrophosphorylase region spans residues 1-231 (MERTCLAVIL…EIEMTGCNNR (231 aa)). UDP-N-acetyl-alpha-D-glucosamine-binding positions include 10–13 (LAAG), lysine 24, glutamine 77, 82–83 (GT), 105–107 (YGD), glycine 143, glutamate 157, asparagine 172, and asparagine 229. Aspartate 107 contributes to the Mg(2+) binding site. Residue asparagine 229 coordinates Mg(2+). Residues 232-252 (AELAVIERFWQERRRREMMLA) are linker. An N-acetyltransferase region spans residues 253-453 (GVTMIAPETV…AIKAAKKAEA (201 aa)). UDP-N-acetyl-alpha-D-glucosamine-binding residues include arginine 318 and lysine 336. Residue histidine 348 is the Proton acceptor of the active site. The UDP-N-acetyl-alpha-D-glucosamine site is built by tyrosine 351 and asparagine 362. Residues alanine 365, 371 to 372 (NY), serine 390, serine 408, and arginine 425 each bind acetyl-CoA.

The protein in the N-terminal section; belongs to the N-acetylglucosamine-1-phosphate uridyltransferase family. In the C-terminal section; belongs to the transferase hexapeptide repeat family. Homotrimer. Mg(2+) serves as cofactor.

It localises to the cytoplasm. It catalyses the reaction alpha-D-glucosamine 1-phosphate + acetyl-CoA = N-acetyl-alpha-D-glucosamine 1-phosphate + CoA + H(+). The enzyme catalyses N-acetyl-alpha-D-glucosamine 1-phosphate + UTP + H(+) = UDP-N-acetyl-alpha-D-glucosamine + diphosphate. It participates in nucleotide-sugar biosynthesis; UDP-N-acetyl-alpha-D-glucosamine biosynthesis; N-acetyl-alpha-D-glucosamine 1-phosphate from alpha-D-glucosamine 6-phosphate (route II): step 2/2. Its pathway is nucleotide-sugar biosynthesis; UDP-N-acetyl-alpha-D-glucosamine biosynthesis; UDP-N-acetyl-alpha-D-glucosamine from N-acetyl-alpha-D-glucosamine 1-phosphate: step 1/1. The protein operates within bacterial outer membrane biogenesis; LPS lipid A biosynthesis. Functionally, catalyzes the last two sequential reactions in the de novo biosynthetic pathway for UDP-N-acetylglucosamine (UDP-GlcNAc). The C-terminal domain catalyzes the transfer of acetyl group from acetyl coenzyme A to glucosamine-1-phosphate (GlcN-1-P) to produce N-acetylglucosamine-1-phosphate (GlcNAc-1-P), which is converted into UDP-GlcNAc by the transfer of uridine 5-monophosphate (from uridine 5-triphosphate), a reaction catalyzed by the N-terminal domain. This Rhizobium etli (strain ATCC 51251 / DSM 11541 / JCM 21823 / NBRC 15573 / CFN 42) protein is Bifunctional protein GlmU.